The following is a 128-amino-acid chain: Holo-[acyl-carrier-protein] synthase (128 aa).

Mg(2+) contacts are provided by Asp-9 and Glu-56.

Belongs to the P-Pant transferase superfamily. AcpS family. Requires Mg(2+) as cofactor.

The protein resides in the cytoplasm. The enzyme catalyses apo-[ACP] + CoA = holo-[ACP] + adenosine 3',5'-bisphosphate + H(+). Its function is as follows. Transfers the 4'-phosphopantetheine moiety from coenzyme A to a Ser of acyl-carrier-protein. The sequence is that of Holo-[acyl-carrier-protein] synthase from Pelagibacter ubique (strain HTCC1062).